The primary structure comprises 304 residues: uncharacterized protein (304 aa).

NAD(+)-binding positions include 136–137 (GI), 215–217 (VGR), and D241. R217 is an active-site residue. E246 is a catalytic residue. The Proton donor role is filled by H265. 265–268 (HTAN) provides a ligand contact to NAD(+).

Belongs to the D-isomer specific 2-hydroxyacid dehydrogenase family.

This is an uncharacterized protein from Corynebacterium melassecola.